The sequence spans 94 residues: Exodeoxyribonuclease 7 small subunit (94 aa).

It belongs to the XseB family. Heterooligomer composed of large and small subunits.

The protein resides in the cytoplasm. It carries out the reaction Exonucleolytic cleavage in either 5'- to 3'- or 3'- to 5'-direction to yield nucleoside 5'-phosphates.. Bidirectionally degrades single-stranded DNA into large acid-insoluble oligonucleotides, which are then degraded further into small acid-soluble oligonucleotides. This Ralstonia nicotianae (strain ATCC BAA-1114 / GMI1000) (Ralstonia solanacearum) protein is Exodeoxyribonuclease 7 small subunit.